A 344-amino-acid chain; its full sequence is Biotin synthase (344 aa).

In terms of domain architecture, Radical SAM core spans 40–267 (AQVQVSTLLS…KSMVRLSAGR (228 aa)). Positions 55, 59, and 62 each coordinate [4Fe-4S] cluster. [2Fe-2S] cluster-binding residues include Cys-99, Cys-130, Cys-190, and Arg-262.

The protein belongs to the radical SAM superfamily. Biotin synthase family. In terms of assembly, homodimer. It depends on [4Fe-4S] cluster as a cofactor. [2Fe-2S] cluster is required as a cofactor.

It carries out the reaction (4R,5S)-dethiobiotin + (sulfur carrier)-SH + 2 reduced [2Fe-2S]-[ferredoxin] + 2 S-adenosyl-L-methionine = (sulfur carrier)-H + biotin + 2 5'-deoxyadenosine + 2 L-methionine + 2 oxidized [2Fe-2S]-[ferredoxin]. Its pathway is cofactor biosynthesis; biotin biosynthesis; biotin from 7,8-diaminononanoate: step 2/2. Functionally, catalyzes the conversion of dethiobiotin (DTB) to biotin by the insertion of a sulfur atom into dethiobiotin via a radical-based mechanism. This chain is Biotin synthase, found in Xanthomonas euvesicatoria pv. vesicatoria (strain 85-10) (Xanthomonas campestris pv. vesicatoria).